The sequence spans 107 residues: Phosphoribosyl-ATP pyrophosphatase (107 aa).

The protein belongs to the PRA-PH family.

It is found in the cytoplasm. It carries out the reaction 1-(5-phospho-beta-D-ribosyl)-ATP + H2O = 1-(5-phospho-beta-D-ribosyl)-5'-AMP + diphosphate + H(+). Its pathway is amino-acid biosynthesis; L-histidine biosynthesis; L-histidine from 5-phospho-alpha-D-ribose 1-diphosphate: step 2/9. In Nitrobacter hamburgensis (strain DSM 10229 / NCIMB 13809 / X14), this protein is Phosphoribosyl-ATP pyrophosphatase.